The sequence spans 287 residues: Elongation factor Ts (287 aa).

An involved in Mg(2+) ion dislocation from EF-Tu region spans residues 81–84; that stretch reads TDFV.

The protein belongs to the EF-Ts family.

It is found in the cytoplasm. Associates with the EF-Tu.GDP complex and induces the exchange of GDP to GTP. It remains bound to the aminoacyl-tRNA.EF-Tu.GTP complex up to the GTP hydrolysis stage on the ribosome. This is Elongation factor Ts from Nitratidesulfovibrio vulgaris (strain ATCC 29579 / DSM 644 / CCUG 34227 / NCIMB 8303 / VKM B-1760 / Hildenborough) (Desulfovibrio vulgaris).